The chain runs to 338 residues: Protein RecA (338 aa).

66-73 (GPESSGKT) is an ATP binding site.

The protein belongs to the RecA family.

Its subcellular location is the cytoplasm. In terms of biological role, can catalyze the hydrolysis of ATP in the presence of single-stranded DNA, the ATP-dependent uptake of single-stranded DNA by duplex DNA, and the ATP-dependent hybridization of homologous single-stranded DNAs. It interacts with LexA causing its activation and leading to its autocatalytic cleavage. The protein is Protein RecA of Geobacter sulfurreducens (strain ATCC 51573 / DSM 12127 / PCA).